The chain runs to 250 residues: Myelin basic protein (250 aa).

Basic and acidic residues predominate over residues 1 to 28 (MGNHSGKRELSAEKASKDGEIHRGEAGK). The disordered stretch occupies residues 1–150 (MGNHSGKREL…SQRSKYLATA (150 aa)). Gly-2 bears the N-acetylalanine mark. Ser-31 and Ser-40 each carry phosphoserine. Residues 95–113 (FSRDAPGREDNTFKDRPSE) are compositionally biased toward basic and acidic residues. Ser-96 is subject to Phosphothreonine. Glu-113 is modified (phosphoserine). Glu-122 is subject to Phosphothreonine. Position 125 is a phosphotyrosine (Thr-125). Phosphoserine is present on residues Ala-135, Arg-139, Ser-141, and Ser-144. Phosphotyrosine occurs at positions 146 and 147. At Thr-149 the chain carries Phosphothreonine. Residue Ser-151 is modified to Phosphoserine. Ser-151 bears the Phosphotyrosine mark. The residue at position 152 (Thr-152) is a Phosphothreonine. Residues Arg-157 and Arg-163 each carry the citrulline modification. Thr-167 carries the phosphothreonine modification. Ser-172 bears the Phosphoserine mark. Arg-175 and Arg-181 each carry omega-N-methylarginine. The segment at 175 to 250 (RFFSGDRGAP…SRSGSPMARR (76 aa)) is disordered. A Phosphoserine modification is found at Ser-188. Residue Thr-197 is modified to Phosphothreonine. Residues 197 to 206 (THYGSLPQKS) are compositionally biased toward polar residues. Phosphotyrosine is present on Tyr-199. Phosphoserine is present on Ser-206. Phosphothreonine occurs at positions 211, 226, and 229. Gln-234 bears the Deamidated glutamine mark. Arg-239 carries the post-translational modification Citrulline. At Ser-241 the chain carries Phosphoserine. Residue Ser-245 is modified to Phosphoserine; by UHMK1. A Citrulline modification is found at Arg-250.

The protein belongs to the myelin basic protein family. In terms of assembly, homodimer. In terms of processing, as in other animals, several charge isomers may be produced as a result of optional post-translational modifications, such as phosphorylation of serine or threonine residues, deamidation of glutamine or asparagine residues, citrullination and methylation of arginine residues. Post-translationally, methylated on arginine residues; decreases with the age of the animal, making MBP more cationic. Phosphorylated by TAOK2, VRK2, MAPK11, MAPK12, MAPK14 and MINK1. In terms of processing, proteolytically cleaved in B cell lysosomes by cathepsin CTSG which degrades the major immunogenic MBP epitope and prevents the activation of MBP-specific autoreactive T cells. In the embryo, isoform 1-isoform 3 are found in neurons within the central nervous system (primarily in pioneer neurons important in the formation of the cortex) and the peripheral nervous system. They are also expressed in the thymus, gut, lung and kidney. In the adult, isoform 1-isoform 3 are highly expressed in the brain (mainly in brain regions rich in oligodendrocytes) and spleen. Lower levels are seen in the heart, kidney and lung. Isoform 2 is also found in cells of the immune system. The isoforms missing the 134 first amino acids (isoform 4-isoform 13) are almost exclusively produced in the myelin-forming cells, the mature oligodendrocytes.

It localises to the myelin membrane. Its subcellular location is the cytoplasm. The protein resides in the nucleus. In terms of biological role, the classic group of MBP isoforms (isoform 4-isoform 13) are with PLP the most abundant protein components of the myelin membrane in the CNS. They have a role in both its formation and stabilization. The non-classic group of MBP isoforms (isoform 1-isoform 3/Golli-MBPs) may preferentially have a role in the early developing brain long before myelination, maybe as components of transcriptional complexes, and may also be involved in signaling pathways in T-cells and neural cells. Differential splicing events combined to optional post-translational modifications give a wide spectrum of isomers, with each of them potentially having a specialized function. This chain is Myelin basic protein (Mbp), found in Mus musculus (Mouse).